A 527-amino-acid polypeptide reads, in one-letter code: Amino acid transporter heavy chain SLC3A2 (527 aa).

The disordered stretch occupies residues 1 to 31; the sequence is MSQDTEVDMKDVELNELEPEKQPMNAADGAA. Residues 1 to 75 are Cytoplasmic-facing; it reads MSQDTEVDMK…AGSPGWVRTR (75 aa). Position 2 is a phosphoserine (serine 2). Threonine 5 is modified (phosphothreonine). The span at 7–21 shows a compositional bias: basic and acidic residues; the sequence is VDMKDVELNELEPEK. Residue lysine 42 forms a Glycyl lysine isopeptide (Lys-Gly) (interchain with G-Cter in ubiquitin) linkage. Serine 58 bears the Phosphoserine mark. Lysine 59 is covalently cross-linked (Glycyl lysine isopeptide (Lys-Gly) (interchain with G-Cter in SUMO2)). Residues 76 to 98 traverse the membrane as a helical; Signal-anchor for type II membrane protein segment; the sequence is WALLLLFWLGWLGMLAGAVVIIV. The Extracellular portion of the chain corresponds to 99-527; sequence RAPRCRELPV…GLLLQFPFVA (429 aa). 4 N-linked (GlcNAc...) asparagine glycosylation sites follow: asparagine 166, asparagine 249, asparagine 259, and asparagine 263. The residue at position 300 (serine 300) is a Phosphoserine. Residues asparagine 318, asparagine 386, and asparagine 400 are each glycosylated (N-linked (GlcNAc...) asparagine). Residue serine 421 is modified to Phosphoserine. N-linked (GlcNAc...) asparagine glycosylation occurs at asparagine 510.

It belongs to the SLC3A transporter family. Disulfide-linked heterodimer with a non-glycosylated light chain (SLC7A5, SLC7A6, SLC7A7, SLC7A8, SLC7A10 or SLC7A11). Interacts with TLCD3A/CT120 and ICAM1. Constitutively and specifically associates with beta-1 integrins (alpha-2/beta-1, alpha-3/beta-1, alpha-5/beta-1 and alpha-6/beta-1), but minimally with alpha-4/beta-1. Interacts with LAPTM4B; recruits SLC3A2 and SLC7A5 to lysosomes to promote leucine uptake into these organelles and is required for mTORC1 activation. Phosphorylation on Ser-300 and on Ser-421 by ecto-protein kinases favors heterotypic cell-cell interactions. In terms of processing, N-glycosylated; N-glycosylation is crucial for trafficking and stability of SLC3A2 to the plasma membrane. In brain expressed on capillary endothelia in cerebral cortex (at protein level). Highest expression in kidney, jejunum, ileum, colon, placenta, testis and spleen. Lower levels found in liver, lung and brain with weakest expression in heart. Expressed in retina, inner blood-retinal barrier of retina, retinal vascular endothelial cells. Also expressed in C6 glioma cells and in the retinal capillary endothelial cell line TR-iBRB2.

Its subcellular location is the apical cell membrane. The protein localises to the cell membrane. It localises to the cell junction. The protein resides in the lysosome membrane. It is found in the melanosome. Its subcellular location is the basolateral cell membrane. Its function is as follows. Acts as a chaperone that facilitates biogenesis and trafficking of functional transporters heterodimers to the plasma membrane. Forms heterodimer with SLC7 family transporters (SLC7A5, SLC7A6, SLC7A7, SLC7A8, SLC7A10 and SLC7A11), a group of amino-acid antiporters. Heterodimers function as amino acids exchangers, the specificity of the substrate depending on the SLC7A subunit. Heterodimers formed by SLC3A2/SLC7A6 or SLC3A2/SLC7A7 mediate the uptake of dibasic amino acids. Heterodimer SLC3A2/SLC7A11 functions as an antiporter by mediating the exchange of extracellular anionic L-cystine and intracellular L-glutamate across the cellular plasma membrane. SLC3A2/SLC7A10 translocates small neutral L- and D-amino acids across the plasma membrane. SLC3A2/SLC75 or SLC3A2/SLC7A8 translocates neutral amino acids with broad specificity, thyroid hormones and L-DOPA. SLC3A2 is essential for plasma membrane localization, stability, and the transport activity of SLC7A5 and SLC7A8. When associated with LAPTM4B, the heterodimer SLC7A5 is recruited to lysosomes to promote leucine uptake into these organelles, and thereby mediates mTORC1 activation. Modulates integrin-related signaling and is essential for integrin-dependent cell spreading, migration and tumor progression. The protein is Amino acid transporter heavy chain SLC3A2 of Rattus norvegicus (Rat).